The following is a 546-amino-acid chain: Oncoprotein-induced transcript 3 protein (546 aa).

An N-terminal signal peptide occupies residues 1–19; the sequence is MPLSLLLTCLSTTVTLVSP. N-linked (GlcNAc...) asparagine glycans are attached at residues Asn-89 and Asn-116. Residues 182 to 222 form the EGF-like; calcium-binding domain; it reads DENECEHNNGGCSEICVNLKNSHRCACGVGRVLRSDGKTCE. Cystine bridges form between Cys-186–Cys-197, Cys-193–Cys-206, and Cys-208–Cys-221. A ZP domain is found at 261–516; the sequence is TCQVPVLCKS…SRCAQGCHRR (256 aa). A glycan (N-linked (GlcNAc...) asparagine) is linked at Asn-299.

In terms of tissue distribution, liver-specific. Expressed only in the hepatocytes.

It localises to the nucleus envelope. Functionally, may be involved in hepatocellular function and development. The sequence is that of Oncoprotein-induced transcript 3 protein (Oit3) from Mus musculus (Mouse).